A 58-amino-acid chain; its full sequence is UPF0509 protein YciZ (58 aa).

Belongs to the UPF0509 family.

The protein is UPF0509 protein YciZ of Escherichia fergusonii (strain ATCC 35469 / DSM 13698 / CCUG 18766 / IAM 14443 / JCM 21226 / LMG 7866 / NBRC 102419 / NCTC 12128 / CDC 0568-73).